A 152-amino-acid chain; its full sequence is Probable ribose-5-phosphate isomerase B (152 aa).

D-ribulose 5-phosphate is bound at residue 12-13 (DH). Cysteine 70 acts as the Proton acceptor in catalysis. 71–75 (GTGVG) is a D-ribulose 5-phosphate binding site. Histidine 103 acts as the Proton donor in catalysis. Aspartate 104, arginine 114, arginine 137, and arginine 141 together coordinate D-ribulose 5-phosphate.

This sequence belongs to the LacAB/RpiB family. As to quaternary structure, homodimer.

The enzyme catalyses aldehydo-D-ribose 5-phosphate = D-ribulose 5-phosphate. It functions in the pathway carbohydrate degradation; pentose phosphate pathway; D-ribose 5-phosphate from D-ribulose 5-phosphate (non-oxidative stage): step 1/1. Catalyzes the interconversion of ribulose-5-P and ribose-5-P. This chain is Probable ribose-5-phosphate isomerase B, found in Mycoplasma pneumoniae (strain ATCC 29342 / M129 / Subtype 1) (Mycoplasmoides pneumoniae).